We begin with the raw amino-acid sequence, 113 residues long: Transcriptional activator RamA (113 aa).

The region spanning 9–107 (DTIVEWIDDN…HQPPGAYRKE (99 aa)) is the HTH araC/xylS-type domain. DNA-binding regions (H-T-H motif) lie at residues 26–47 (EDIARHAGYSKWHLQRLFLQYK) and 74–97 (VYEICLRYGFESQQTFTRIFTRTF).

Functionally, probable transcriptional activator. This Enterobacter cloacae protein is Transcriptional activator RamA (ramA).